Consider the following 915-residue polypeptide: Alanine--tRNA ligase (915 aa).

Zn(2+)-binding residues include His605, His609, Cys709, and His713. The interval 882-901 (GGGGDERLAQGGGRNPDGLT) is disordered.

This sequence belongs to the class-II aminoacyl-tRNA synthetase family. The cofactor is Zn(2+).

The protein localises to the cytoplasm. It catalyses the reaction tRNA(Ala) + L-alanine + ATP = L-alanyl-tRNA(Ala) + AMP + diphosphate. Functionally, catalyzes the attachment of alanine to tRNA(Ala) in a two-step reaction: alanine is first activated by ATP to form Ala-AMP and then transferred to the acceptor end of tRNA(Ala). Also edits incorrectly charged Ser-tRNA(Ala) and Gly-tRNA(Ala) via its editing domain. This is Alanine--tRNA ligase from Methanopyrus kandleri (strain AV19 / DSM 6324 / JCM 9639 / NBRC 100938).